The sequence spans 459 residues: MVNLGTAVRSLLVHLIGLLVWQFDISISPVAAIVTDTFNSSDGGRLFQFPDGVQNWPALSIVVIIIMTIGGNILVIMAVSMEKKLHNATNYFLMSLAIADMLVGLLVMPLSLLAILYDYVWPLPRYLCPVWISLDVLFSTASIMHLCAISLDRYVAIRNPIEHSRFNSRTKAIMKIAIVWAISIGVSVPIPVIGLRDESKVFVNNTTCVLNDPNFVLIGSFVAFFIPLTIMVITYFLTIYVLRRQTLMLLRGHTEEELRNISLNFLKCCCKKGDEEENAPNPNPDQKPRRKKKEKRPRGTMQAINNEKKASKVLGIVFFVFLIMWCPFFITNILSVLCGKACNQKLMEKLLNVFVWIGYVCSGINPLVYTLFNKIYRRAFSKYLRCDYKPDKKPPVRQIPRVAATALSGRELNVNIYRHTNERVVRKANDTEPGIEMQVENLELPVNPSNVVSERISSV.

The first 32 residues, Met-1–Ala-32, serve as a signal peptide directing secretion. At Ile-33 to Trp-56 the chain is on the extracellular side. The helical transmembrane segment at Pro-57–Met-81 threads the bilayer. Residues Glu-82–Asn-87 are Cytoplasmic-facing. Residues Ala-88–Leu-112 form a helical membrane-spanning segment. Topologically, residues Leu-113–Pro-129 are extracellular. Cys-128 and Cys-208 are oxidised to a cystine. Residues Val-130 to Asp-152 traverse the membrane as a helical segment. Position 140 (Thr-140) interacts with ergotamine. The DRY motif; important for ligand-induced conformation changes signature appears at Asp-152–Tyr-154. Over Arg-153–Ser-168 the chain is Cytoplasmic. Residues Arg-169–Ile-190 form a helical membrane-spanning segment. At Pro-191–Asn-214 the chain is on the extracellular side. Residues Asn-204 and Asn-205 are each glycosylated (N-linked (GlcNAc...) asparagine). Leu-210 serves as a coordination point for ergotamine. A helical transmembrane segment spans residues Phe-215–Leu-237. Residues Thr-238–Lys-312 are Cytoplasmic-facing. The disordered stretch occupies residues Asp-274–Gln-302. Residues Pro-288–Arg-298 are compositionally biased toward basic residues. A helical transmembrane segment spans residues Val-313–Leu-337. The cysteines at positions 338 and 342 are disulfide-linked. At Cys-338 to Glu-348 the chain is on the extracellular side. A helical transmembrane segment spans residues Lys-349–Leu-371. Residues Asn-365–Tyr-369 carry the NPxxY motif; important for ligand-induced conformation changes and signaling motif. Residues Phe-372 to Val-459 lie on the Cytoplasmic side of the membrane. A PDZ-binding motif is present at residues Ser-457 to Val-459.

The protein belongs to the G-protein coupled receptor 1 family. Interacts with MPDZ. Interacts with ARRB2. Interacts with MPP3; this interaction stabilizes the receptor at the plasma membrane and prevents the desensitization of the HTR2C receptor-mediated calcium response. As to expression, detected in brain cortex, hypothalamus, brainstem and arcuate nucleus. Detected in the paraventricular nucleus of the hypothalamus.

Its subcellular location is the cell membrane. G-protein coupled receptor for 5-hydroxytryptamine (serotonin). Also functions as a receptor for various drugs and psychoactive substances, including ergot alkaloid derivatives, 1-2,5,-dimethoxy-4-iodophenyl-2-aminopropane (DOI) and lysergic acid diethylamide (LSD). Ligand binding causes a conformation change that triggers signaling via guanine nucleotide-binding proteins (G proteins) and modulates the activity of downstream effectors. HTR2C is coupled to G(q)/G(11) G alpha proteins and activates phospholipase C-beta, releasing diacylglycerol (DAG) and inositol 1,4,5-trisphosphate (IP3) second messengers that modulate the activity of phosphatidylinositol 3-kinase and promote the release of Ca(2+) ions from intracellular stores, respectively. Beta-arrestin family members inhibit signaling via G proteins and mediate activation of alternative signaling pathways. Regulates neuronal activity via the activation of short transient receptor potential calcium channels in the brain, and thereby modulates the activation of pro-opiomelanocortin neurons and the release of CRH that then regulates the release of corticosterone. Plays a role in the regulation of appetite and eating behavior, responses to anxiogenic stimuli and stress. Plays a role in insulin sensitivity and glucose homeostasis. The polypeptide is 5-hydroxytryptamine receptor 2C (Mus musculus (Mouse)).